The sequence spans 127 residues: uncharacterized protein (127 aa).

A helical transmembrane segment spans residues 84-103; it reads IALLSLFISLSIRITCFPFF.

It localises to the membrane. This is an uncharacterized protein from Saccharomyces cerevisiae (strain ATCC 204508 / S288c) (Baker's yeast).